Here is a 1229-residue protein sequence, read N- to C-terminus: Membrane-anchored lipid-binding protein SIP3 (1229 aa).

Residues 1–1066 (MSVHGRDPKK…AEKFSRINRM (1066 aa)) lie on the Cytoplasmic side of the membrane. A PH domain is found at 309–423 (SPEKSGWLYM…WLIAFEATKK (115 aa)). The VASt domain occupies 771–976 (EYSITYNHEY…VLRYYLEKIG (206 aa)). The helical transmembrane segment at 1067 to 1087 (MVVGLLASIMINILLSEKASV) threads the bilayer. Over 1088–1229 (PYWSIKRAEK…ELEKLRPPIT (142 aa)) the chain is Lumenal. N-linked (GlcNAc...) asparagine glycosylation occurs at N1206.

It belongs to the SIP3 family. As to quaternary structure, interacts with SNF1.

The protein localises to the endoplasmic reticulum membrane. Its function is as follows. May be involved in sterol transfer between intracellular membranes. The chain is Membrane-anchored lipid-binding protein SIP3 from Saccharomyces cerevisiae (strain ATCC 204508 / S288c) (Baker's yeast).